Reading from the N-terminus, the 261-residue chain is Thioredoxin-like protein HCF164, chloroplastic (261 aa).

The N-terminal 40 residues, 1–40 (MARLVFSLNLPSSHGFNLSPRNLQSFFVTQTGAPRFRAVR), are a transit peptide targeting the chloroplast. Residues 39-91 (VRCKPNPESSETKQEKLVIDNGETSSASKEVESSSSVADSSSSSSSGFPESPN) form a disordered region. A compositionally biased stretch (low complexity) spans 63–84 (SSASKEVESSSSVADSSSSSSS). The 129-residue stretch at 101 to 229 (VTVIAALSLF…LVENVNALAA (129 aa)) folds into the Thioredoxin domain. Catalysis depends on nucleophile residues cysteine 150 and cysteine 153. Cysteine 150 and cysteine 153 form a disulfide bridge.

Belongs to the thioredoxin family. In terms of assembly, interacts in vitro with LTO1.

The protein localises to the plastid. The protein resides in the chloroplast thylakoid membrane. In terms of biological role, thiol-disulfide oxidoreductase that participates in various redox reactions in the chloroplast. Mediates the reduction of PSI-N in the thylakoid lumen. May interact and probably reduce other target proteins of the thylakoid membrane, such as FTSH2, FTSH8, LHCB5, atpA, atpB, atpE, petA and petC. Involved in the biogenesis of the plastid cytochrome b6f complex. Reducing equivalents are provided by stromal M-type thioredoxins and probably transduced through the thylakoid membrane by CCDA. Possesses low insulin disulfide bonds reducing activity. The polypeptide is Thioredoxin-like protein HCF164, chloroplastic (Arabidopsis thaliana (Mouse-ear cress)).